The chain runs to 234 residues: Zinc finger FYVE domain-containing protein 21 (234 aa).

The segment at 44–104 adopts an FYVE-type zinc-finger fold; that stretch reads DKECPRCMQC…QCADCALVSH (61 aa). Cys-50, Cys-53, Cys-66, Cys-69, Cys-74, Cys-77, Cys-96, and Cys-99 together coordinate Zn(2+). The interval 107-234 is PH-like; that stretch reads AEFYDKQLKV…TKLLYESRDQ (128 aa).

As to quaternary structure, interacts with PTK2/FAK1. In terms of tissue distribution, widely expressed.

The protein localises to the cell junction. Its subcellular location is the focal adhesion. It localises to the cytoplasmic vesicle. It is found in the endosome. Its function is as follows. Plays a role in cell adhesion, and thereby in cell motility which requires repeated formation and disassembly of focal adhesions. Regulates microtubule-induced PTK2/FAK1 dephosphorylation, an event important for focal adhesion disassembly, as well as integrin beta-1/ITGB1 cell surface expression. This is Zinc finger FYVE domain-containing protein 21 (Zfyve21) from Mus musculus (Mouse).